A 141-amino-acid chain; its full sequence is Nucleoside diphosphate kinase (141 aa).

ATP is bound by residues Lys11, Phe59, Arg87, Thr93, Arg104, and Asn114. Residue His117 is the Pros-phosphohistidine intermediate of the active site.

It belongs to the NDK family. Homotetramer. Mg(2+) is required as a cofactor.

The protein resides in the cytoplasm. The enzyme catalyses a 2'-deoxyribonucleoside 5'-diphosphate + ATP = a 2'-deoxyribonucleoside 5'-triphosphate + ADP. The catalysed reaction is a ribonucleoside 5'-diphosphate + ATP = a ribonucleoside 5'-triphosphate + ADP. Its function is as follows. Major role in the synthesis of nucleoside triphosphates other than ATP. The ATP gamma phosphate is transferred to the NDP beta phosphate via a ping-pong mechanism, using a phosphorylated active-site intermediate. The sequence is that of Nucleoside diphosphate kinase from Pseudomonas fluorescens (strain Pf0-1).